A 128-amino-acid chain; its full sequence is Large ribosomal subunit protein uL18 (128 aa).

The disordered stretch occupies residues 1–36 (MAKRSSLTRRGVSPRAAARARRHMRVRKKVRGTPER). Residues 18 to 31 (ARARRHMRVRKKVR) are compositionally biased toward basic residues.

It belongs to the universal ribosomal protein uL18 family. Part of the 50S ribosomal subunit; part of the 5S rRNA/L5/L18/L25 subcomplex. Contacts the 5S and 23S rRNAs.

This is one of the proteins that bind and probably mediate the attachment of the 5S RNA into the large ribosomal subunit, where it forms part of the central protuberance. In Thermobifida fusca (strain YX), this protein is Large ribosomal subunit protein uL18.